The primary structure comprises 307 residues: Urease accessory protein UreD (307 aa).

The protein belongs to the UreD family. As to quaternary structure, ureD, UreF and UreG form a complex that acts as a GTP-hydrolysis-dependent molecular chaperone, activating the urease apoprotein by helping to assemble the nickel containing metallocenter of UreC. The UreE protein probably delivers the nickel.

It is found in the cytoplasm. Its function is as follows. Required for maturation of urease via the functional incorporation of the urease nickel metallocenter. This is Urease accessory protein UreD from Prochlorococcus marinus (strain NATL2A).